We begin with the raw amino-acid sequence, 955 residues long: 4-alpha-glucanotransferase DPE2 (955 aa).

Met1 is modified (N-acetylmethionine). 2 CBM20 domains span residues 13-122 and 157-270; these read KSSK…LWQS and SDQD…PWRG. A disordered region spans residues 925-955; that stretch reads SGRSVPANVSGEDINKSRGEVIANGSTKPNP.

It belongs to the disproportionating enzyme family.

Its subcellular location is the cytoplasm. It localises to the cytosol. It carries out the reaction Transfers a segment of a (1-&gt;4)-alpha-D-glucan to a new position in an acceptor, which may be glucose or a (1-&gt;4)-alpha-D-glucan.. Inactivated in response to cold stress. Cytosolic alpha-glucanotransferase essential for the cytosolic metabolism of maltose, an intermediate on the pathway by which starch is converted to sucrose in leaves at night. Metabolizes maltose exported from the chloroplast and is specific for beta-maltose. May play a role in freezing tolerance. Temperature drop induces inactivation of DPE2 that leads to rapid accumulation of maltose, a solute that protects cells from freezing damage. This is 4-alpha-glucanotransferase DPE2 (DPE2) from Arabidopsis thaliana (Mouse-ear cress).